The sequence spans 289 residues: tRNA pseudouridine synthase B (289 aa).

Asp38 acts as the Nucleophile in catalysis.

This sequence belongs to the pseudouridine synthase TruB family. Type 1 subfamily.

It catalyses the reaction uridine(55) in tRNA = pseudouridine(55) in tRNA. Responsible for synthesis of pseudouridine from uracil-55 in the psi GC loop of transfer RNAs. In Clostridium acetobutylicum (strain ATCC 824 / DSM 792 / JCM 1419 / IAM 19013 / LMG 5710 / NBRC 13948 / NRRL B-527 / VKM B-1787 / 2291 / W), this protein is tRNA pseudouridine synthase B.